The sequence spans 384 residues: Potassium channel subfamily K member 18 (384 aa).

At 1 to 23 (MEVSGHPQARRCCPEALGKLFPG) the chain is on the cytoplasmic side. A helical transmembrane segment spans residues 24–44 (LCFLCFLVTYALVGAVVFSAI). N-linked (GlcNAc...) asparagine glycosylation occurs at Asn-70. The segment at residues 103–129 (FLSSLFFCCTVFSTVGYGYIYPVTRLG) is an intramembrane region (pore-forming). Positions 116, 117, 118, and 119 each coordinate K(+). The segment at 116–121 (TVGYGY) is selectivity filter 1. The chain crosses the membrane as a helical span at residues 130–148 (KYLCMLYALFGIPLMFLVL). Topologically, residues 149 to 280 (TDTGDILATI…EVGQQVERLD (132 aa)) are cytoplasmic. The tract at residues 200–205 (PQIIIS) is interaction with calcineurin. Residues 249 to 254 (RSNSCP) form an interaction with YWHAH region. Residues Ser-252 and Ser-264 each carry the phosphoserine modification. A helical transmembrane segment spans residues 281–301 (IPLPIIALIVFAYISCAAAIL). Residues 314 to 328 (FYFCFVTLTTIGFGD) constitute an intramembrane region (pore-forming). The segment at 323–328 (TIGFGD) is selectivity filter 2. Residues 335–355 (NFFLFFSIYIIVGMEIVFIAF) form a helical membrane-spanning segment. The Cytoplasmic segment spans residues 356–384 (KLVQNRLIDIYKNVMLFFAKGKFYHLVKK).

It belongs to the two pore domain potassium channel (TC 1.A.1.8) family. Homodimer. Heterodimer with KCNK2. Heterodimer with KCNK10. Interacts with calcineurin. Interacts with YWHAH, in a phosphorylation-dependent manner. In terms of processing, N-glycosylated. Phosphorylation of Ser-264 is required for the binding of 14-3-3eta/YWHAH. Calcineurin-mediated dephosphorylation enhances channel activity. As to expression, expressed in dorsal root ganglion and trigeminal ganglion neurons. Detected at low levels in spinal cord. Expressed in regulatory T cells (at protein level).

It is found in the cell membrane. The enzyme catalyses K(+)(in) = K(+)(out). Its activity is regulated as follows. Activated by volatile anesthetics but inhibited by amide local anesthetics. Inhibited by Ba(2+) ions. Inhibited by free polyunsaturated fatty acids. Channel conductance is sensitive to intracellular pH, it decreases at acidic pH and increases at basic pH. In contrast to its mouse ortholog, it is not regulated by extracellular protons. Insensitive to changes in temperature. Functionally, k(+) channel that conducts outward and inward rectifying currents at depolarized and hyperpolarized membrane potentials, respectively. The outward rectifying currents are voltage-dependent, coupled to K(+) electrochemical gradient across the membrane, whereas the inward currents can be induced in response to activation of Ca(2+)-mobilizing receptors. Homo- and heterodimerizes to form functional channels with distinct regulatory and gating properties. In trigeminal ganglia sensory neurons, the heterodimers of KCNK18/TRESK and KCNK2/TREK-1 or KCNK10/TREK-2 inhibit neuronal firing and neurogenic inflammation by stabilizing the resting membrane potential at K(+) equilibrium potential as well as by regulating the threshold of action potentials and the spike frequency. In thymocytes, conducts K(+) currents upon T cell receptor (TCR) signaling leading to sustained Ca(2+) influx and NF-kappa-B activation, FOXP3 transcription and positive selection of regulatory T cell (Treg) progenitor subsets. Appears to mediate the analgesics effects of hydroxy-alpha-sanshool, a metabolite naturally present in Schezuan pepper and other Xanthoxylum plants. The chain is Potassium channel subfamily K member 18 from Homo sapiens (Human).